The primary structure comprises 129 residues: MIKPPLKSRKKIKKNIIEGVAHIHASFNNTIVTISDRQGNALSWATSGGVGFKGSRKSTPFAAQVAAEHAGRAALEYGVKNLEIRVKGPGPGRDSAVRALNATGFKITSITDVTPVPHNGCRPPKKRRI.

The protein belongs to the universal ribosomal protein uS11 family. In terms of assembly, part of the 30S ribosomal subunit. Interacts with proteins S7 and S18. Binds to IF-3.

Located on the platform of the 30S subunit, it bridges several disparate RNA helices of the 16S rRNA. Forms part of the Shine-Dalgarno cleft in the 70S ribosome. The sequence is that of Small ribosomal subunit protein uS11 from Nitrosomonas eutropha (strain DSM 101675 / C91 / Nm57).